The primary structure comprises 223 residues: ATP-dependent dethiobiotin synthetase BioD (223 aa).

Thr-16 is a binding site for Mg(2+). Residue Lys-37 is part of the active site. Ser-41 lines the substrate pocket. The Mg(2+) site is built by Asp-50 and Glu-111. Residues Asp-50, 111 to 114 (EGAG), and 171 to 172 (NR) each bind ATP.

The protein belongs to the dethiobiotin synthetase family. In terms of assembly, homodimer. Mg(2+) serves as cofactor.

The protein localises to the cytoplasm. The catalysed reaction is (7R,8S)-7,8-diammoniononanoate + CO2 + ATP = (4R,5S)-dethiobiotin + ADP + phosphate + 3 H(+). The protein operates within cofactor biosynthesis; biotin biosynthesis; biotin from 7,8-diaminononanoate: step 1/2. Its function is as follows. Catalyzes a mechanistically unusual reaction, the ATP-dependent insertion of CO2 between the N7 and N8 nitrogen atoms of 7,8-diaminopelargonic acid (DAPA, also called 7,8-diammoniononanoate) to form a ureido ring. The polypeptide is ATP-dependent dethiobiotin synthetase BioD (Anaeromyxobacter dehalogenans (strain 2CP-C)).